Here is a 302-residue protein sequence, read N- to C-terminus: D-alanine--D-alanine ligase (302 aa).

The ATP-grasp domain occupies 100–294 (KALFRREGLL…FPELVEKLIQ (195 aa)). An ATP-binding site is contributed by 127–180 (GLNYPIFVKSNIGGSSVNVHLVTNYEELFIAMEALFNAGEEVLLEEAIIGQEVT). Mg(2+) is bound by residues Asp248, Glu261, and Asn263.

The protein belongs to the D-alanine--D-alanine ligase family. The cofactor is Mg(2+). Mn(2+) is required as a cofactor.

The protein localises to the cytoplasm. The catalysed reaction is 2 D-alanine + ATP = D-alanyl-D-alanine + ADP + phosphate + H(+). Its pathway is cell wall biogenesis; peptidoglycan biosynthesis. Functionally, cell wall formation. This is D-alanine--D-alanine ligase from Lawsonia intracellularis (strain PHE/MN1-00).